The primary structure comprises 808 residues: Beta-catenin/armadillo-related protein 1 (808 aa).

The tract at residues 1–85 (MDLDPNLVIN…SSHLSGMSSM (85 aa)) is involved in transcriptional activation. ARM repeat units lie at residues 118-160 (RAIP…NETK), 165-209 (CVIF…RAIS), and 369-408 (SDVP…NLVA). Residues 541 to 808 (NVQDVIEGVR…DQYPYRQGRF (268 aa)) form an involved in transcriptional activation region. The interval 702-808 (TYEGAGEQWS…DQYPYRQGRF (107 aa)) is disordered. The segment covering 723-736 (YCNSSGRDSSKTYN) has biased composition (polar residues). Residues 737 to 750 (SPMYHSPPSMYPEY) show a composition bias toward low complexity. Residues 786–798 (NIPSNQGPSSHLS) are compositionally biased toward polar residues.

This sequence belongs to the beta-catenin family. In terms of assembly, interacts with apr-1, axl-1, daf-16, lin-23, and pop-1 (via acidic region in N-terminus 1-44). Interacts (via ARM repeats) with pry-1.

The protein resides in the cytoplasm. It localises to the nucleus. It is found in the membrane. Its subcellular location is the cell junction. Functionally, participates in the Wnt signaling pathway which affects cell fate and may regulate the stem cell divisions of seam cells during larval development. Functions as a transcriptional activator but is dependent on the interaction with pop-1. Involved in maintaining lin-39 Hox expression and regulating glr-1 abundance at the synapses. Required for mab-5 expression during Q neuroblast migration and for oxidative stress-induced daf-16 signaling. Has roles in egg laying, vulva precursor cell fate determination, Q neuroblast migration, posterior ectodermal cell P12 specification, movement, body length, male tail development and dauer induction. Functionally redundant to wrm-1 and hmp-2. The protein is Beta-catenin/armadillo-related protein 1 (bar-1) of Caenorhabditis briggsae.